Consider the following 340-residue polypeptide: Cysteinyl leukotriene receptor 1 (340 aa).

Topologically, residues 1–31 are extracellular; it reads MDETGNPTIPPASNNTCYDSIDDFRNQVYST. Asn-14 carries an N-linked (GlcNAc...) asparagine glycan. Residues 32–52 form a helical membrane-spanning segment; that stretch reads LYSMISVVGFFGNGFVLYVLV. Topologically, residues 53 to 60 are cytoplasmic; the sequence is KTYHEKSA. A helical transmembrane segment spans residues 61–81; it reads FQVYMINLAVADLLCVCTLPL. Residues 82 to 109 are Extracellular-facing; it reads RVAYYVHKGIWLFGDFLCRLSTYALYVN. A disulfide bond links Cys-99 and Cys-176. Residues 110–130 form a helical membrane-spanning segment; sequence LYCSIFFMTAMSFFRCVAIVF. Topologically, residues 131–144 are cytoplasmic; that stretch reads PVQNISLVTQKKAR. The chain crosses the membrane as a helical span at residues 145 to 165; sequence LVCIAIWMFVILTSSPFLMAN. Residues 166–196 lie on the Extracellular side of the membrane; the sequence is TYKDEKNNTKCFEPPQDNQAKNYVLILHYVS. The N-linked (GlcNAc...) asparagine glycan is linked to Asn-172. The chain crosses the membrane as a helical span at residues 197–217; the sequence is LFIGFIIPFITIIVCYTMIIF. At 218–233 the chain is on the cytoplasmic side; sequence TLLKSSMKKNLSSRKR. The chain crosses the membrane as a helical span at residues 234–254; sequence AIGMIIVVTAAFLVSFMPYHI. Residues 255–279 lie on the Extracellular side of the membrane; the sequence is QRTIHLHFLHNKTKPCDSILRMQKS. An N-linked (GlcNAc...) asparagine glycan is attached at Asn-265. Residues 280 to 300 form a helical membrane-spanning segment; that stretch reads VVITLSLAASNCCFDPLLYFF. Topologically, residues 301–340 are cytoplasmic; sequence SGGNFRRRLSTIRKYSLSSMTYIPKKKTSLPQKGKDICKE.

This sequence belongs to the G-protein coupled receptor 1 family.

The protein resides in the cell membrane. Its function is as follows. Receptor for cysteinyl leukotrienes mediating bronchoconstriction of individuals with and without asthma. Stimulation by LTD4 results in the contraction and proliferation of smooth muscle, edema, eosinophil migration and damage to the mucus layer in the lung. This response is mediated via a G-protein that activates a phosphatidylinositol-calcium second messenger system. The chain is Cysteinyl leukotriene receptor 1 (CYSLTR1) from Cavia porcellus (Guinea pig).